Consider the following 351-residue polypeptide: Heat-inducible transcription repressor HrcA (351 aa).

Belongs to the HrcA family.

In terms of biological role, negative regulator of class I heat shock genes (grpE-dnaK-dnaJ and groELS operons). Prevents heat-shock induction of these operons. This chain is Heat-inducible transcription repressor HrcA, found in Acetivibrio thermocellus (strain ATCC 27405 / DSM 1237 / JCM 9322 / NBRC 103400 / NCIMB 10682 / NRRL B-4536 / VPI 7372) (Clostridium thermocellum).